A 336-amino-acid chain; its full sequence is Biotin synthase (336 aa).

Residues 51–270 (NQVQCNQLLN…IALARIMMPK (220 aa)) form the Radical SAM core domain. Cysteine 66, cysteine 70, and cysteine 73 together coordinate [4Fe-4S] cluster. [2Fe-2S] cluster contacts are provided by cysteine 110, cysteine 141, cysteine 201, and arginine 274.

The protein belongs to the radical SAM superfamily. Biotin synthase family. Homodimer. Requires [4Fe-4S] cluster as cofactor. It depends on [2Fe-2S] cluster as a cofactor.

The catalysed reaction is (4R,5S)-dethiobiotin + (sulfur carrier)-SH + 2 reduced [2Fe-2S]-[ferredoxin] + 2 S-adenosyl-L-methionine = (sulfur carrier)-H + biotin + 2 5'-deoxyadenosine + 2 L-methionine + 2 oxidized [2Fe-2S]-[ferredoxin]. The protein operates within cofactor biosynthesis; biotin biosynthesis; biotin from 7,8-diaminononanoate: step 2/2. Its function is as follows. Catalyzes the conversion of dethiobiotin (DTB) to biotin by the insertion of a sulfur atom into dethiobiotin via a radical-based mechanism. The sequence is that of Biotin synthase from Rhodopseudomonas palustris (strain ATCC BAA-98 / CGA009).